A 284-amino-acid chain; its full sequence is UPF0276 protein PA3283 (284 aa).

This sequence belongs to the UPF0276 family.

This is UPF0276 protein PA3283 from Pseudomonas aeruginosa (strain ATCC 15692 / DSM 22644 / CIP 104116 / JCM 14847 / LMG 12228 / 1C / PRS 101 / PAO1).